We begin with the raw amino-acid sequence, 401 residues long: uncharacterized protein (401 aa).

The protein belongs to the serpin family.

In terms of biological role, may act as an inhibitor for a host chymotrypsin-like protease. This is an uncharacterized protein from Acanthamoeba polyphaga mimivirus (APMV).